Reading from the N-terminus, the 696-residue chain is Polyribonucleotide nucleotidyltransferase (696 aa).

The Mg(2+) site is built by Asp-486 and Asp-492. The 60-residue stretch at 553–612 folds into the KH domain; that stretch reads PRIIVRNIPKDRIGELIGPGGKNVRGISELTGAELYIEDDGRVTISGSNQESAEKAAKMV. The S1 motif domain maps to 622–690; that stretch reads GKIYEGKVKR…KTGKIDLSRK (69 aa).

Belongs to the polyribonucleotide nucleotidyltransferase family. Mg(2+) is required as a cofactor.

The protein localises to the cytoplasm. It carries out the reaction RNA(n+1) + phosphate = RNA(n) + a ribonucleoside 5'-diphosphate. Its function is as follows. Involved in mRNA degradation. Catalyzes the phosphorolysis of single-stranded polyribonucleotides processively in the 3'- to 5'-direction. In Leptospira borgpetersenii serovar Hardjo-bovis (strain L550), this protein is Polyribonucleotide nucleotidyltransferase.